Here is a 219-residue protein sequence, read N- to C-terminus: Ribose-5-phosphate isomerase A (219 aa).

Substrate is bound by residues 28-31 (TGST), 81-84 (DGAD), and 94-97 (KGGG). E103 functions as the Proton acceptor in the catalytic mechanism. Residue K121 coordinates substrate.

Belongs to the ribose 5-phosphate isomerase family. In terms of assembly, homodimer.

The catalysed reaction is aldehydo-D-ribose 5-phosphate = D-ribulose 5-phosphate. It participates in carbohydrate degradation; pentose phosphate pathway; D-ribose 5-phosphate from D-ribulose 5-phosphate (non-oxidative stage): step 1/1. Functionally, catalyzes the reversible conversion of ribose-5-phosphate to ribulose 5-phosphate. The polypeptide is Ribose-5-phosphate isomerase A (Shewanella sp. (strain ANA-3)).